Consider the following 466-residue polypeptide: Argininosuccinate lyase (466 aa).

The protein belongs to the lyase 1 family. Argininosuccinate lyase subfamily.

The protein resides in the cytoplasm. It carries out the reaction 2-(N(omega)-L-arginino)succinate = fumarate + L-arginine. The protein operates within amino-acid biosynthesis; L-arginine biosynthesis; L-arginine from L-ornithine and carbamoyl phosphate: step 3/3. The polypeptide is Argininosuccinate lyase (Campylobacter concisus (strain 13826)).